Here is a 276-residue protein sequence, read N- to C-terminus: Rho-related protein racO (276 aa).

Position 11–18 (11–18 (GDGLIGKT)) interacts with GTP. Positions 34–42 (YSSFDSEYL) match the Effector region motif. Residues 60–64 (ENDGF) and 124–127 (IKTD) contribute to the GTP site. The disordered stretch occupies residues 199–276 (FKNNNNNNNY…NKTTNKCKIS (78 aa)). Residues 200–270 (KNNNNNNNYN…SYKNHNNKTT (71 aa)) are compositionally biased toward low complexity. Cys-273 is subject to Cysteine methyl ester. The S-geranylgeranyl cysteine moiety is linked to residue Cys-273. The propeptide at 274–276 (KIS) is removed in mature form.

The protein belongs to the small GTPase superfamily. Rho family.

It is found in the cell membrane. This is Rho-related protein racO (racO) from Dictyostelium discoideum (Social amoeba).